The primary structure comprises 405 residues: Corticosteroid-binding globulin (405 aa).

A signal peptide spans 1–22 (MPLLLYTCLLWLPTSGLWTVQA). N-linked (GlcNAc...) asparagine glycans are attached at residues Asn-31, Asn-96, and Asn-176. Residue Gln-254 participates in cortisol binding. An N-linked (GlcNAc...) asparagine glycan is attached at Asn-260. Asn-286 is a cortisol binding site. Residues Asn-330 and Asn-369 are each glycosylated (N-linked (GlcNAc...) asparagine). 2 residues coordinate cortisol: His-390 and Trp-393.

It belongs to the serpin family. N-glycosylated; binds 5 oligosaccharide chains. Post-translationally, glycosylation in position Asn-260 is needed for steroid binding. Plasma; synthesized in liver. Has also been identified in a number of glycocorticoid responsive cells.

It localises to the secreted. Its function is as follows. Major transport protein for glucocorticoids and progestins in the blood of almost all vertebrate species. This Homo sapiens (Human) protein is Corticosteroid-binding globulin (SERPINA6).